A 488-amino-acid chain; its full sequence is N-acyl-D-glutamate deacylase (488 aa).

Belongs to the metallo-dependent hydrolases superfamily. N-acyl-D-amino-acid deacylase family. It depends on Zn(2+) as a cofactor.

The protein resides in the cytoplasm. The enzyme catalyses an N-acyl-D-glutamate + H2O = D-glutamate + a carboxylate. Its activity is regulated as follows. Inhibited by cobalt, copper and EDTA. The sequence is that of N-acyl-D-glutamate deacylase from Alcaligenes xylosoxydans xylosoxydans (Achromobacter xylosoxidans).